The sequence spans 418 residues: NADH-quinone oxidoreductase subunit D (418 aa).

This sequence belongs to the complex I 49 kDa subunit family. In terms of assembly, NDH-1 is composed of 14 different subunits. Subunits NuoB, C, D, E, F, and G constitute the peripheral sector of the complex.

It localises to the cell inner membrane. The enzyme catalyses a quinone + NADH + 5 H(+)(in) = a quinol + NAD(+) + 4 H(+)(out). NDH-1 shuttles electrons from NADH, via FMN and iron-sulfur (Fe-S) centers, to quinones in the respiratory chain. The immediate electron acceptor for the enzyme in this species is believed to be ubiquinone. Couples the redox reaction to proton translocation (for every two electrons transferred, four hydrogen ions are translocated across the cytoplasmic membrane), and thus conserves the redox energy in a proton gradient. The polypeptide is NADH-quinone oxidoreductase subunit D (Methylacidiphilum infernorum (isolate V4) (Methylokorus infernorum (strain V4))).